Consider the following 573-residue polypeptide: Proline--tRNA ligase (573 aa).

It belongs to the class-II aminoacyl-tRNA synthetase family. ProS type 1 subfamily. Homodimer.

The protein localises to the cytoplasm. The enzyme catalyses tRNA(Pro) + L-proline + ATP = L-prolyl-tRNA(Pro) + AMP + diphosphate. Functionally, catalyzes the attachment of proline to tRNA(Pro) in a two-step reaction: proline is first activated by ATP to form Pro-AMP and then transferred to the acceptor end of tRNA(Pro). As ProRS can inadvertently accommodate and process non-cognate amino acids such as alanine and cysteine, to avoid such errors it has two additional distinct editing activities against alanine. One activity is designated as 'pretransfer' editing and involves the tRNA(Pro)-independent hydrolysis of activated Ala-AMP. The other activity is designated 'posttransfer' editing and involves deacylation of mischarged Ala-tRNA(Pro). The misacylated Cys-tRNA(Pro) is not edited by ProRS. The chain is Proline--tRNA ligase from Citrifermentans bemidjiense (strain ATCC BAA-1014 / DSM 16622 / JCM 12645 / Bem) (Geobacter bemidjiensis).